Reading from the N-terminus, the 640-residue chain is Endoglucanase 1 (640 aa).

The signal sequence occupies residues Met-1 to Ala-24. Residue Asp-94 is the Nucleophile of the active site. Catalysis depends on residues His-433, Asp-485, and Glu-494. 2 N-linked (GlcNAc...) asparagine glycosylation sites follow: Asn-528 and Asn-548.

This sequence belongs to the glycosyl hydrolase 9 (cellulase E) family. Expressed in roots, leaf sheaths and flowers.

It localises to the secreted. It catalyses the reaction Endohydrolysis of (1-&gt;4)-beta-D-glucosidic linkages in cellulose, lichenin and cereal beta-D-glucans.. The polypeptide is Endoglucanase 1 (GLU7) (Oryza sativa subsp. japonica (Rice)).